We begin with the raw amino-acid sequence, 178 residues long: Large ribosomal subunit protein uL6 (178 aa).

This sequence belongs to the universal ribosomal protein uL6 family. Part of the 50S ribosomal subunit.

Functionally, this protein binds to the 23S rRNA, and is important in its secondary structure. It is located near the subunit interface in the base of the L7/L12 stalk, and near the tRNA binding site of the peptidyltransferase center. In Helicobacter pylori (strain P12), this protein is Large ribosomal subunit protein uL6.